The following is a 461-amino-acid chain: MNVRVRGIYTTALTELLGGEYDIVQASPPIQRRFEASFPVAVADATVRTSDDRLGAGIAGTADAVDAVGETLSALGRDTFRWTDPAPRGAVFYGEVTETLGSGAVVDLGTVDGDSVEGFLPYNRVEGYVDEGDSYRVQVASPEPPWGDARPSLATALRIPGGLVELRRGSEGGLSETARMADLLPVDPPEGWTPNWSRAADDASLEAMEAALRRASDRAETVMEAVVDADRDEPGRIVAPQAGAWLLFGRESRFELDEYRRQIETTMPGHHRTKAATTAASAAVDFAEALCEPDGAFPFDVVTRQFGPTEGDDVTISHGKPDGRTISLGRGEVTDRDPEAESITVEREMSGGGTYDAIGVKREAGDIATTTFVEGRWWYPTVYCSADGERRGTYVNICTPLEVFPDTVRYVDLHVDVVKGPDGDVRRVDDDELDAAVEAGEISEPLAERAREVAAAIKKAL.

The region spanning 89–158 is the S1 motif domain; the sequence is GAVFYGEVTE…ARPSLATALR (70 aa).

It belongs to the FAU-1 family.

In terms of biological role, probable RNase involved in rRNA stability through maturation and/or degradation of precursor rRNAs. Binds to RNA in loop regions with AU-rich sequences. This Natronomonas pharaonis (strain ATCC 35678 / DSM 2160 / CIP 103997 / JCM 8858 / NBRC 14720 / NCIMB 2260 / Gabara) (Halobacterium pharaonis) protein is Probable ribonuclease FAU-1.